A 493-amino-acid polypeptide reads, in one-letter code: MKEMMMFKRSVIAMACIFALSACGGGGGGSPDVKSADTLSKPAAPVVSEKETEAKEDAPQAGSQGQGAPSAQGSQDMAAVSEENTGNGGAVTADNPKNEDEVAQNDMPQNAAGTDSSTPNHTPDPNMLAGNMENQATDAGESSQPANQPDMANAADGMQGDDPSAGGQNAGNTAAQGANQAGNNQAAGSSDPIPASNPAPANGGSNFGRVDLANGVLIDGPSQNITLTHCKGDSCSGNNFLDEEVQLKSEFEKLSDADKISNYKKDGKNDKFVGLVADSVQMKGINQYIIFYKPKPTSFARFRRSARSRRSLPAEMPLIPVNQADTLIVDGEAVSLTGHSGNIFAPEGNYRYLTYGAEKLPGGSYALRVQGEPAKGEMLAGAAVYNGEVLHFHTENGRPYPTRGRFAAKVDFGSKSVDGIIDSGDDLHMGTQKFKAAIDGNGFKGTWTENGSGDVSGKFYGPAGEEVAGKYSYRPTDAEKGGFGVFAGKKEQD.

Residues 1–22 form the signal peptide; it reads MKEMMMFKRSVIAMACIFALSA. A lipid anchor (N-palmitoyl cysteine) is attached at Cys-23. Cys-23 is lipidated: S-diacylglycerol cysteine. The tract at residues 27–206 is disordered; the sequence is GGGSPDVKSA…NPAPANGGSN (180 aa). Residues 48 to 58 are compositionally biased toward basic and acidic residues; the sequence is SEKETEAKEDA. Positions 59–75 are enriched in low complexity; that stretch reads PQAGSQGQGAPSAQGSQ. Composition is skewed to polar residues over residues 106 to 123 and 132 to 147; these read DMPQ…NHTP and MENQ…QPAN. The span at 165–188 shows a compositional bias: low complexity; it reads AGGQNAGNTAAQGANQAGNNQAAG. The short motif at 301-311 is the Arg-rich motif element; that stretch reads RFRRSARSRRS.

This sequence belongs to the NHBA family. The C-terminal beta-barrel forms a monomer. In terms of processing, cleaved in vivo by the Neisserial phase-variable autotransporter/serine protease NalP to give 2 fragments. The N-terminus remains in the cell outer membrane while the C-terminus (beginning on Ser-298) is soluble; this soluble fragment is called C2. Cleaved in vitro by human lactoferrin (LTF, between Arg-310 and Ser-311), this fragment is called C1. Recombinant and cell surface protein is cleaved by human saliva kallikrein (KLK1) between Ser-308 and Arg-309; in saliva kallikrein is more active on NHBA than lactoferrin. Human plasma kallikrein (KLKB1) cleaves in a similar manner to KLK1.

It localises to the cell outer membrane. In terms of biological role, a major human immunogenic protein detected in patients recovering from meningitidis, where it induces bactericidal antibodies. Binds human cells, heparin and heparan sulfate proteoglycan in vitro via the Arg-rich motif. Heparin-binding to this protein protects bacteria against killing by bactericidal antibodies (serum killing). The bacteria binds a number of human extracellular sialyated and/or sulfated glycans via this protein, including chondroitin sulfate, heparin and ganglioside GT3. Whole protein binds DNA. Its function is as follows. Plays a role in extracellular-DNA (eDNA) mediated biofilm formation. In some strains (including cc32 strain H44/76 but not cc11 strain B16B6) eDNA stimulates biofilm formation. When NHBA is not processed by NalP, biofilm formation increases. This is probably because the number of positively charged, NHBA- and IgA-derived DNA-binding peptides on the cell surface rises, resulting in increased DNA-binding peptides and increased biofilm formation. The polypeptide is Neisserial heparin binding antigen (Neisseria meningitidis serogroup B / serotype 15 (strain H44/76)).